A 195-amino-acid chain; its full sequence is Imidazoleglycerol-phosphate dehydratase (195 aa).

Belongs to the imidazoleglycerol-phosphate dehydratase family.

It localises to the cytoplasm. It catalyses the reaction D-erythro-1-(imidazol-4-yl)glycerol 3-phosphate = 3-(imidazol-4-yl)-2-oxopropyl phosphate + H2O. It participates in amino-acid biosynthesis; L-histidine biosynthesis; L-histidine from 5-phospho-alpha-D-ribose 1-diphosphate: step 6/9. This Roseobacter denitrificans (strain ATCC 33942 / OCh 114) (Erythrobacter sp. (strain OCh 114)) protein is Imidazoleglycerol-phosphate dehydratase.